A 336-amino-acid polypeptide reads, in one-letter code: NEDD4 family-interacting protein 2 (336 aa).

2 disordered regions span residues 1-24 (MARRRSQRVCASGPSMLNSARGAP) and 37-156 (SAAA…SITV). Residues 1 to 231 (MARRRSQRVC…ADQLRVGNDG (231 aa)) are Cytoplasmic-facing. A compositionally biased stretch (low complexity) spans 37 to 48 (SAAAAGATGSEE). A compositionally biased stretch (basic and acidic residues) spans 78–99 (EHGEDSLSRKPDPEPGRMDHHQ). An interaction with NEDD4 region spans residues 148–151 (PPPY). The short motif at 148-151 (PPPY) is the PPxY motif 1 element. Tyr-151, Tyr-167, Tyr-171, and Tyr-177 each carry phosphotyrosine; by SRC. 2 short sequence motifs (PPxY motif) span residues 174–177 (PPPY) and 184–186 (PTY). The helical transmembrane segment at 232–252 (IFMLAFFMAFIFNWLGFCLSF) threads the bilayer. Residues 253-257 (CITNT) are Extracellular-facing. Residues 258–278 (IAGRYGAICGFGLSLIKWILI) traverse the membrane as a helical segment. The Cytoplasmic portion of the chain corresponds to 279 to 287 (VRFSDYFTG). A helical membrane pass occupies residues 288 to 308 (YFNGQYWLWWIFLVLGLLLFF). Residues 309–336 (RGFVNYLKVRNMSESMAAAHRTRYFFLL) are Extracellular-facing.

In terms of assembly, forms heterodimers with NDFIP1. Interacts with HECT domain-containing E3 ubiquitin-protein ligases, including NEDD4. Interacts with NEDD4L. Interacts with PTEN. When phosphorylated at Tyr-167, interacts with SRC and LYN SH2 domain. May thus act as a scaffold that recruits SRC to NDFIP1, enhancing NDFIP1 phosphorylation. Interacts with SLC11A2/DMT1. May interact with phosphorylated EGFR. Interacts with KCNH2. In terms of processing, ubiquitinated by NEDD4 and ITCH. Also ubiquitinated by NEDD4L. Ubiquitination by NEDD4 or NEDD4L does not affect turnover. Post-translationally, undergoes transient tyrosine-phosphorylation following EGF stimulation, most probably catalyzed by SRC. Phosphorylation on Tyr-151, Tyr-171 and Tyr-177 are dependent on the phosphorylation on Tyr-167. Also phosphorylated by LYN and FYN. As to expression, expressed in brain, lung, heart, skeletal muscle, kidney, liver and placenta.

The protein localises to the endosome membrane. It localises to the golgi apparatus membrane. The protein resides in the endosome. It is found in the multivesicular body membrane. Functionally, activates HECT domain-containing E3 ubiquitin-protein ligases, including ITCH, NEDD4, NEDD4L, SMURF2, WWP1 and WWP2, and consequently modulates the stability of their targets. As a result, may control many cellular processes. Recruits ITCH, NEDD4 and SMURF2 to endosomal membranes. Negatively regulates KCNH2 potassium channel activity by decreasing its cell-surface expression and interfering with channel maturation through recruitment of NEDD4L to the Golgi apparatus and multivesicular body where it mediates KCNH2 degradation. May modulate EGFR signaling. Together with NDFIP1, limits the cytokine signaling and expansion of effector Th2 T-cells by promoting degradation of JAK1, probably by ITCH- and NEDD4L-mediated ubiquitination. This Homo sapiens (Human) protein is NEDD4 family-interacting protein 2 (NDFIP2).